Here is a 690-residue protein sequence, read N- to C-terminus: Protein arginine N-methyltransferase 7 (690 aa).

SAM-dependent MTase PRMT-type domains follow at residues 5-355 (FQDS…FSLW) and 364-690 (KEPL…EEEQ).

It belongs to the class I-like SAM-binding methyltransferase superfamily. Protein arginine N-methyltransferase family. PRMT7 subfamily.

In terms of biological role, essential arginine methyltransferase that can both catalyze the formation of omega-N monomethylarginine (MMA) and symmetrical dimethylarginine (sDMA). Specifically mediates the symmetrical dimethylation of arginine residues in the small nuclear ribonucleoproteins SmD1 and SmD3. The sequence is that of Protein arginine N-methyltransferase 7 (Art7) from Anopheles gambiae (African malaria mosquito).